Consider the following 78-residue polypeptide: Small ribosomal subunit protein bS18 (78 aa).

Belongs to the bacterial ribosomal protein bS18 family. As to quaternary structure, part of the 30S ribosomal subunit. Forms a tight heterodimer with protein bS6.

Functionally, binds as a heterodimer with protein bS6 to the central domain of the 16S rRNA, where it helps stabilize the platform of the 30S subunit. This chain is Small ribosomal subunit protein bS18, found in Lactobacillus johnsonii (strain CNCM I-12250 / La1 / NCC 533).